Reading from the N-terminus, the 145-residue chain is Large ribosomal subunit protein uL15 (145 aa).

The segment covering 1-11 (MELHSLKSTPG) has biased composition (polar residues). The interval 1–48 (MELHSLKSTPGSRKEKHRKGRGHAAGKGKQAGKGQSGQRKRSKVRLGF) is disordered. The span at 14–26 (KEKHRKGRGHAAG) shows a compositional bias: basic residues.

Belongs to the universal ribosomal protein uL15 family. As to quaternary structure, part of the 50S ribosomal subunit.

Its function is as follows. Binds to the 23S rRNA. This chain is Large ribosomal subunit protein uL15, found in Mycoplasmopsis pulmonis (strain UAB CTIP) (Mycoplasma pulmonis).